Reading from the N-terminus, the 524-residue chain is Solute carrier family 2, facilitated glucose transporter member 2 (524 aa).

The Cytoplasmic portion of the chain corresponds to 1–6 (MTEDKI). Residues 7–26 (TGTLVFAVLTAVLGSFQFGY) traverse the membrane as a helical segment. The Extracellular segment spans residues 27–89 (DIGVINAPQQ…SWAEEETTAS (63 aa)). An N-linked (GlcNAc...) asparagine glycan is attached at N62. The chain crosses the membrane as a helical span at residues 90–115 (ASLIIMLWSLSVSIFAIGGMIASFFG). Residues 116-126 (GMLGDRLGRIK) lie on the Cytoplasmic side of the membrane. The chain crosses the membrane as a helical span at residues 127–145 (AMLVANILSLVGALLMWFS). The Extracellular portion of the chain corresponds to 146–150 (KLGPS). Residues 151-176 (HILIISGRGISGLYCGLISGLVPMYI) traverse the membrane as a helical segment. Over 177 to 187 (GEIAPTKFRGA) the chain is Cytoplasmic. A helical membrane pass occupies residues 188–211 (IGALHQLAIVTGILVSQIIGLDFL). Q193 is a binding site for D-glucose. The Extracellular segment spans residues 212 to 216 (LGNHE). Residues 217-239 (LWHILLGLSAVPAVLQSLMLFFC) traverse the membrane as a helical segment. Topologically, residues 240 to 303 (PESPRYLYIK…LFTNSSYRQP (64 aa)) are cytoplasmic. Residues 304-327 (ILVALMLHMAQQFSGINGIFYYST) traverse the membrane as a helical segment. Residues 314 to 315 (QQ) and N320 contribute to the D-glucose site. Residues 328–338 (SIFQTAGISQP) lie on the Extracellular side of the membrane. The chain crosses the membrane as a helical span at residues 339 to 360 (VYATIGVGAINTIFTALSVFLV). Residue N349 coordinates D-glucose. At 361–366 (EKAGRR) the chain is on the cytoplasmic side. Residues 367–389 (SLFLIGMSGMFVCAIFMSVGLVL) form a helical membrane-spanning segment. The Extracellular segment spans residues 390–394 (LDKLP). Residues 395–413 (WMSYVSMTAIFLFVSFFEI) form a helical membrane-spanning segment. The D-glucose site is built by E412 and W420. Topologically, residues 414–433 (GPGPIPWFMVAEFFSQGPRP) are cytoplasmic. Residues 434–458 (AALAMAAFSNWTCNFIIALCFQYIA) traverse the membrane as a helical segment. Residues 459 to 463 (DFCGP) lie on the Extracellular side of the membrane. A helical transmembrane segment spans residues 464 to 482 (YVFFLFAGVVLVFTLFTFF). At 483–524 (KVPETKGKSFEEIAAEFQKKSGSAQSPKAAVEMEFLGATETV) the chain is on the cytoplasmic side. A Phosphothreonine modification is found at T523.

It belongs to the major facilitator superfamily. Sugar transporter (TC 2.A.1.1) family. Glucose transporter subfamily. Post-translationally, N-glycosylated; required for stability and retention at the cell surface of pancreatic beta cells.

The protein resides in the cell membrane. It carries out the reaction D-glucose(out) = D-glucose(in). It catalyses the reaction D-fructose(out) = D-fructose(in). The enzyme catalyses L-dehydroascorbate(out) = L-dehydroascorbate(in). The catalysed reaction is D-galactose(in) = D-galactose(out). D-glucose and maltose competitively inhibit fructose transport. D-glucose, D-fructose and maltose inhibit deoxyglucose transport. In terms of biological role, facilitative hexose transporter that mediates the transport of glucose, fructose and galactose. Likely mediates the bidirectional transfer of glucose across the plasma membrane of hepatocytes and is responsible for uptake of glucose by the beta cells; may comprise part of the glucose-sensing mechanism of the beta cell. May also participate with the Na(+)/glucose cotransporter in the transcellular transport of glucose in the small intestine and kidney. Also able to mediate the transport of dehydroascorbate. The chain is Solute carrier family 2, facilitated glucose transporter member 2 from Sus scrofa (Pig).